The primary structure comprises 465 residues: Ribulose bisphosphate carboxylase large chain (465 aa).

At lysine 4 the chain carries N6,N6,N6-trimethyllysine. Substrate contacts are provided by asparagine 113 and threonine 163. Lysine 165 serves as the catalytic Proton acceptor. Residue lysine 167 participates in substrate binding. Mg(2+)-binding residues include lysine 191, aspartate 193, and glutamate 194. Position 191 is an N6-carboxylysine (lysine 191). The active-site Proton acceptor is the histidine 284. Arginine 285, histidine 317, and serine 369 together coordinate substrate.

This sequence belongs to the RuBisCO large chain family. Type I subfamily. Heterohexadecamer of 8 large chains and 8 small chains; disulfide-linked. The disulfide link is formed within the large subunit homodimers. Mg(2+) serves as cofactor. Post-translationally, the disulfide bond which can form in the large chain dimeric partners within the hexadecamer appears to be associated with oxidative stress and protein turnover.

The protein localises to the plastid. It localises to the chloroplast. It carries out the reaction 2 (2R)-3-phosphoglycerate + 2 H(+) = D-ribulose 1,5-bisphosphate + CO2 + H2O. It catalyses the reaction D-ribulose 1,5-bisphosphate + O2 = 2-phosphoglycolate + (2R)-3-phosphoglycerate + 2 H(+). Functionally, ruBisCO catalyzes two reactions: the carboxylation of D-ribulose 1,5-bisphosphate, the primary event in carbon dioxide fixation, as well as the oxidative fragmentation of the pentose substrate in the photorespiration process. Both reactions occur simultaneously and in competition at the same active site. The polypeptide is Ribulose bisphosphate carboxylase large chain (Senega cruciata (Cross-leaved milkwort)).